Here is a 259-residue protein sequence, read N- to C-terminus: 7alpha-hydroxysteroid dehydrogenase (259 aa).

NAD(+)-binding positions include I18, 37–38 (DY), and N90. The glycochenodeoxycholate site is built by S145 and Y158. NAD(+) contacts are provided by residues Y158, K162, and 191-193 (ILT). Y158 functions as the Proton acceptor in the catalytic mechanism.

This sequence belongs to the short-chain dehydrogenases/reductases (SDR) family. In terms of assembly, homotetramer.

The enzyme catalyses cholate + NAD(+) = 3alpha,12alpha-dihydroxy-7-oxo-5beta-cholanate + NADH + H(+). It catalyses the reaction chenodeoxycholate + NAD(+) = 7-oxolithocholate + NADH + H(+). It carries out the reaction taurochenodeoxycholate + NAD(+) = 7-oxotaurolithocholate + NADH + H(+). The catalysed reaction is glycochenodeoxycholate + NAD(+) = 7-oxoglycolithocholate + NADH + H(+). The enzyme catalyses taurocholate + NAD(+) = 7-oxo-taurodeoxycholate + NADH + H(+). It catalyses the reaction glycocholate + NAD(+) = 7-oxo-glycodeoxycholate + NADH + H(+). It carries out the reaction an aromatic primary alcohol + NAD(+) = an aromatic aldehyde + NADH + H(+). The catalysed reaction is benzyl alcohol + NAD(+) = benzaldehyde + NADH + H(+). The enzyme catalyses 4-cyanobenzyl alcohol + NAD(+) = 4-cyanobenzaldehyde + NADH + H(+). It catalyses the reaction 4-acetoxybenzyl alcohol + NAD(+) = 4-acetoxybenzaldehyde + NADH + H(+). It carries out the reaction 4-(trifluoromethyl)benzyl alcohol + NAD(+) = 4-(trifluoromethyl)benzaldehyde + NADH + H(+). 7alpha-hydroxysteroid dehydrogenase involved in the metabolism of bile acids in the gut. Catalyzes the NAD(+)-dependent oxidation of the 7alpha-hydroxy group of 7alpha-hydroxysteroids, such as cholate, chenodeoxycholate, taurochenodeoxycholate, glycochenodeoxycholate, taurocholate and glycocholate, to the corresponding 7-oxosteroids. Since it is also able to catalyze the reduction of nonsteroidal carbonyl compounds such as various benzaldehyde analogs to their corresponding benzyl alcohols, this enzyme may also function in the detoxification of xenobiotics containing carbonyl groups in the large intestine. This chain is 7alpha-hydroxysteroid dehydrogenase, found in Bacteroides fragilis (strain ATCC 25285 / DSM 2151 / CCUG 4856 / JCM 11019 / LMG 10263 / NCTC 9343 / Onslow / VPI 2553 / EN-2).